We begin with the raw amino-acid sequence, 97 residues long: UPF0235 protein APL_1380 (97 aa).

Belongs to the UPF0235 family.

This is UPF0235 protein APL_1380 from Actinobacillus pleuropneumoniae serotype 5b (strain L20).